Consider the following 89-residue polypeptide: Small ribosomal subunit protein uS15 (89 aa).

Positions 1-21 (MSITTEEKARVMKEYGTKDGD) are enriched in basic and acidic residues. The interval 1-24 (MSITTEEKARVMKEYGTKDGDTGS) is disordered.

Belongs to the universal ribosomal protein uS15 family. As to quaternary structure, part of the 30S ribosomal subunit. Forms a bridge to the 50S subunit in the 70S ribosome, contacting the 23S rRNA.

In terms of biological role, one of the primary rRNA binding proteins, it binds directly to 16S rRNA where it helps nucleate assembly of the platform of the 30S subunit by binding and bridging several RNA helices of the 16S rRNA. Functionally, forms an intersubunit bridge (bridge B4) with the 23S rRNA of the 50S subunit in the ribosome. This is Small ribosomal subunit protein uS15 from Ruegeria pomeroyi (strain ATCC 700808 / DSM 15171 / DSS-3) (Silicibacter pomeroyi).